A 144-amino-acid chain; its full sequence is Grifin (144 aa).

A Galectin domain is found at Phe-5 to Ala-133. Ser-138 is modified (phosphoserine).

Homodimer. Lens-specific. Located at the interface between lens fiber cells (at protein level).

The sequence is that of Grifin (Grifin) from Rattus norvegicus (Rat).